We begin with the raw amino-acid sequence, 164 residues long: ATP synthase subunit b (164 aa).

A helical transmembrane segment spans residues 6-26 (GELIGNFILITGSFILLLVLI).

Belongs to the ATPase B chain family. As to quaternary structure, F-type ATPases have 2 components, F(1) - the catalytic core - and F(0) - the membrane proton channel. F(1) has five subunits: alpha(3), beta(3), gamma(1), delta(1), epsilon(1). F(0) has three main subunits: a(1), b(2) and c(10-14). The alpha and beta chains form an alternating ring which encloses part of the gamma chain. F(1) is attached to F(0) by a central stalk formed by the gamma and epsilon chains, while a peripheral stalk is formed by the delta and b chains.

The protein resides in the cell membrane. Functionally, f(1)F(0) ATP synthase produces ATP from ADP in the presence of a proton or sodium gradient. F-type ATPases consist of two structural domains, F(1) containing the extramembraneous catalytic core and F(0) containing the membrane proton channel, linked together by a central stalk and a peripheral stalk. During catalysis, ATP synthesis in the catalytic domain of F(1) is coupled via a rotary mechanism of the central stalk subunits to proton translocation. Its function is as follows. Component of the F(0) channel, it forms part of the peripheral stalk, linking F(1) to F(0). The polypeptide is ATP synthase subunit b (Streptococcus pneumoniae serotype 2 (strain D39 / NCTC 7466)).